Here is a 368-residue protein sequence, read N- to C-terminus: Dihydroorotate dehydrogenase (quinone) (368 aa).

Residues 67-71 (AGFDK) and Thr-91 contribute to the FMN site. Lys-71 serves as a coordination point for substrate. A substrate-binding site is contributed by 116-120 (NRMGF). 2 residues coordinate FMN: Asn-146 and Asn-179. Asn-179 serves as a coordination point for substrate. Ser-182 (nucleophile) is an active-site residue. Asn-184 provides a ligand contact to substrate. 2 residues coordinate FMN: Lys-222 and Thr-250. 251–252 (NT) contacts substrate. FMN-binding positions include Gly-276, Gly-305, and 326–327 (YS).

This sequence belongs to the dihydroorotate dehydrogenase family. Type 2 subfamily. Monomer. Requires FMN as cofactor.

The protein localises to the cell membrane. The catalysed reaction is (S)-dihydroorotate + a quinone = orotate + a quinol. The protein operates within pyrimidine metabolism; UMP biosynthesis via de novo pathway; orotate from (S)-dihydroorotate (quinone route): step 1/1. Functionally, catalyzes the conversion of dihydroorotate to orotate with quinone as electron acceptor. This Streptomyces avermitilis (strain ATCC 31267 / DSM 46492 / JCM 5070 / NBRC 14893 / NCIMB 12804 / NRRL 8165 / MA-4680) protein is Dihydroorotate dehydrogenase (quinone).